Reading from the N-terminus, the 92-residue chain is Large ribosomal subunit protein bL27 (92 aa).

Residues 1 to 21 (MSKKKGVGSSRNGRDSESKRL) form a disordered region. The span at 12 to 21 (NGRDSESKRL) shows a compositional bias: basic and acidic residues.

The protein belongs to the bacterial ribosomal protein bL27 family.

This Halothermothrix orenii (strain H 168 / OCM 544 / DSM 9562) protein is Large ribosomal subunit protein bL27.